Reading from the N-terminus, the 237-residue chain is Phosphoserine phosphatase (237 aa).

Catalysis depends on Asp-39, which acts as the Nucleophile. Mg(2+) contacts are provided by Asp-39 and Glu-41. The active-site Proton donor is the Glu-41. Substrate is bound by residues Glu-47, Arg-78, 122-123 (SD), and Lys-165. Mg(2+) is bound at residue Asp-184. Substrate is bound at residue Asn-187.

It belongs to the thrH family. It depends on Mg(2+) as a cofactor.

The catalysed reaction is O-phospho-L-serine + H2O = L-serine + phosphate. The enzyme catalyses O-phospho-D-serine + H2O = D-serine + phosphate. Its pathway is amino-acid biosynthesis; L-serine biosynthesis; L-serine from 3-phospho-D-glycerate: step 3/3. Its function is as follows. Phosphoserine phosphatase that mediates dephosphorylation of phosphoserine in the serine biosynthesis pathway. Also able to dephosphorylate phospho-threonine. This is Phosphoserine phosphatase from Pseudomonas syringae pv. tomato (strain ATCC BAA-871 / DC3000).